Consider the following 211-residue polypeptide: Pyridoxine/pyridoxamine 5'-phosphate oxidase (211 aa).

Residues 8–11 (RNEY) and Lys-66 contribute to the substrate site. Residues 61–66 (RVVLLK), 76–77 (FT), Lys-83, and Gln-105 each bind FMN. Residues Tyr-123, Arg-127, and Ser-131 each contribute to the substrate site. Residues 140–141 (QS) and Trp-184 each bind FMN. 190–192 (RLH) serves as a coordination point for substrate. Position 194 (Arg-194) interacts with FMN.

It belongs to the pyridoxamine 5'-phosphate oxidase family. As to quaternary structure, homodimer. FMN is required as a cofactor.

It carries out the reaction pyridoxamine 5'-phosphate + O2 + H2O = pyridoxal 5'-phosphate + H2O2 + NH4(+). It catalyses the reaction pyridoxine 5'-phosphate + O2 = pyridoxal 5'-phosphate + H2O2. It participates in cofactor metabolism; pyridoxal 5'-phosphate salvage; pyridoxal 5'-phosphate from pyridoxamine 5'-phosphate: step 1/1. It functions in the pathway cofactor metabolism; pyridoxal 5'-phosphate salvage; pyridoxal 5'-phosphate from pyridoxine 5'-phosphate: step 1/1. Functionally, catalyzes the oxidation of either pyridoxine 5'-phosphate (PNP) or pyridoxamine 5'-phosphate (PMP) into pyridoxal 5'-phosphate (PLP). This Mannheimia succiniciproducens (strain KCTC 0769BP / MBEL55E) protein is Pyridoxine/pyridoxamine 5'-phosphate oxidase.